A 271-amino-acid polypeptide reads, in one-letter code: Phthiotriol/phenolphthiotriol dimycocerosates methyltransferase 1 (271 aa).

Belongs to the methyltransferase superfamily. Phthiotriol/phenolphthiotriol dimycocerosates methyltransferase family.

In terms of biological role, catalyzes the methylation of the lipid moiety of the intermediate compounds phthiotriol and glycosylated phenolphthiotriol dimycoserosates to form phthiocerol dimycocerosates (DIM A) and glycosylated phenolphthiocerol dimycocerosates (PGL). The chain is Phthiotriol/phenolphthiotriol dimycocerosates methyltransferase 1 from Mycobacterium ulcerans (strain Agy99).